The following is a 551-amino-acid chain: Probable inorganic carbon transporter subunit DabB2 (551 aa).

14 helical membrane passes run 6–26 (SHTTGLLLLAMPALLLMAAVI), 42–62 (VQWTSFAAFGLALLAVVSFLF), 65–85 (QQNLMLGAGSLPAGLGLLALS), 86–106 (IQVNGLTLVLASLVSFVLSVI), 132–152 (GFFLLVVISGNLGLFTLAIIA), 187–207 (LLLAATVLIGHQIGSLEFSQI), 217–237 (LSIALHVAAWLIVLAAILKSA), 252–272 (PTPVSALMHAGVVYSGAIIVL), 284–304 (ALLLLALIGLMTLAIGSLVML), 321–341 (LGFMMLELGLGLFGLALLHLV), 374–394 (VVAWFTTVIVSGLFTLGIAAA), 404–424 (MLPAVLTIIALATAQLMLKAL), 434–454 (VAAGAAIAMTGVYVFLHEVFI), and 469–489 (PLLDLLLMAITIITFLFVAWL).

Belongs to the inorganic carbon transporter (TC 9.A.2) DabB family. In terms of assembly, forms a complex with DabA2, possibly a heterodimer.

The protein localises to the cell inner membrane. Uptake of inorganic carbon by cells in the presence of thiosulphate is fully inhibited by the uncouplers carbonyl cyanide m-chlorophenyl hydrazone (CCCP), carbonyl cyanide p-trifluoromethoxyphenyl hydrazone (FCCP), S13 or SF6847. Not inhibited by the ATPase inhibitor N,N-dicyclohexylcarbodiimide (DCCD). Inorganic carbon uptake is inhibited by the ionophore carbonyl cyanide m-chlorophenyl hydrazone (CCCP), suggesting uptake is coupled to a cation gradient. In terms of biological role, part of an energy-coupled inorganic carbon pump; its substrate may be carbon dioxide. Expression of both dabA2 and dabB2 (DAB2) restores growth in ambient air to E.coli deleted of its carbonic anhydrase genes (called CAfree, deletion of 'can' and 'cynT'); neither dabA2 or dabB2 alone is sufficient. Rescue is pH-independent, suggesting it transports CO(2) and not carbonate ions. Together the genes allow greater than normal uptake of inorganic carbon by E.coli. Uptake of carbon dioxide rather than bicarbonate has been suggested based on kinetic calculations. This Halothiobacillus neapolitanus (strain ATCC 23641 / c2) (Thiobacillus neapolitanus) protein is Probable inorganic carbon transporter subunit DabB2.